A 609-amino-acid polypeptide reads, in one-letter code: Arginine--tRNA ligase (609 aa).

Residues 132 to 142 carry the 'HIGH' region motif; it reads ANPTSSLHVGH.

It belongs to the class-I aminoacyl-tRNA synthetase family. As to quaternary structure, monomer.

It localises to the cytoplasm. It catalyses the reaction tRNA(Arg) + L-arginine + ATP = L-arginyl-tRNA(Arg) + AMP + diphosphate. This is Arginine--tRNA ligase from Psychrobacter arcticus (strain DSM 17307 / VKM B-2377 / 273-4).